A 322-amino-acid polypeptide reads, in one-letter code: Putative integrase ORF3 (322 aa).

One can recognise an Integrase catalytic domain in the interval 153-322 (RGKLTDFKSI…SSKEMFLQNI (170 aa)).

This sequence belongs to the plectrovirus integrase ORF3 family.

This protein may encode an integrase, which is necessary for integration of the viral DNA into host genome. This Spiroplasma virus SpV1-R8A2 B (SpV1) protein is Putative integrase ORF3.